A 633-amino-acid polypeptide reads, in one-letter code: Pollen receptor-like kinase 3 (633 aa).

Residues 1-19 (MTAVLFLCFLLICFSFTPS) form the signal peptide. 2 N-linked (GlcNAc...) asparagine glycosylation sites follow: Asn22 and Asn37. A disulfide bridge connects residues Cys53 and Cys62. 5 LRR repeats span residues 90–115 (LPNL…KLPG), 117–137 (KSLL…FFKE), 138–162 (TPQL…LMQL), 163–186 (AGLE…TDGN), and 188–210 (VLKS…ISDR). Residue Asn123 is glycosylated (N-linked (GlcNAc...) asparagine). A disulfide bridge links Cys224 with Cys232. Asn246 carries an N-linked (GlcNAc...) asparagine glycan. A helical membrane pass occupies residues 249–269 (AKAIFMVILFLLIFLFVVAII). The span at 294–314 (VEVRVPDSIKKPIDSSKKRSN) shows a compositional bias: basic and acidic residues. The disordered stretch occupies residues 294-339 (VEVRVPDSIKKPIDSSKKRSNAEGSSKKGSSHNGKGAGGGPGSGMG). Over residues 328–338 (KGAGGGPGSGM) the composition is skewed to gly residues. The Protein kinase domain occupies 358–633 (KAAAEVLGNG…IVRRIERVTL (276 aa)). ATP is bound by residues 364–372 (LGNGSLGSA) and Lys386. Ser438 carries the phosphoserine modification. The residue at position 458 (Thr458) is a Phosphothreonine. Ser535 carries the post-translational modification Phosphoserine.

Belongs to the protein kinase superfamily. Ser/Thr protein kinase family. As to quaternary structure, interacts in vitro with ROPGEF1 (via PRONE domain). Interacts with PRK6. Expressed in pollen and/or in flowers, but not in leaves.

Its subcellular location is the membrane. The enzyme catalyses L-seryl-[protein] + ATP = O-phospho-L-seryl-[protein] + ADP + H(+). The catalysed reaction is L-threonyl-[protein] + ATP = O-phospho-L-threonyl-[protein] + ADP + H(+). With respect to regulation, the phosphorylation activity is calcium-independent. Functionally, receptor-like kinase involved in the control of pollen germination and pollen tube polar growth. Can phosphorylate ROPGEF1 in vitro. The chain is Pollen receptor-like kinase 3 from Arabidopsis thaliana (Mouse-ear cress).